A 520-amino-acid chain; its full sequence is Amine oxidase [flavin-containing] B (520 aa).

S2 is subject to N-acetylserine. At 2 to 489 the chain is on the cytoplasmic side; that stretch reads SGKCDVVVVG…TFLERHLPSV (488 aa). Position 52 is an N6-acetyllysine (K52). The residue at position 397 (C397) is an S-8alpha-FAD cysteine. Residues 490 to 516 traverse the membrane as a helical; Anchor for type IV membrane protein segment; it reads PGLLRLIGLTAIFSATALGVLAHKRGL. The Mitochondrial intermembrane portion of the chain corresponds to 517-520; that stretch reads LVRV.

Belongs to the flavin monoamine oxidase family. In terms of assembly, monomer, homo- or heterodimer (containing two subunits of similar size). Each subunit contains a covalently bound flavin. Enzymatically active as monomer. FAD serves as cofactor.

Its subcellular location is the mitochondrion outer membrane. The catalysed reaction is a secondary aliphatic amine + O2 + H2O = a primary amine + an aldehyde + H2O2. It carries out the reaction (R)-adrenaline + O2 + H2O = (R)-3,4-dihydroxymandelaldehyde + methylamine + H2O2. It catalyses the reaction a primary methyl amine + O2 + H2O = an aldehyde + H2O2 + NH4(+). The enzyme catalyses benzylamine + O2 + H2O = benzaldehyde + H2O2 + NH4(+). The catalysed reaction is dopamine + O2 + H2O = 3,4-dihydroxyphenylacetaldehyde + H2O2 + NH4(+). It carries out the reaction tyramine + O2 + H2O = (4-hydroxyphenyl)acetaldehyde + H2O2 + NH4(+). It catalyses the reaction (R)-noradrenaline + O2 + H2O = (R)-3,4-dihydroxymandelaldehyde + H2O2 + NH4(+). The enzyme catalyses 2-phenylethylamine + O2 + H2O = 2-phenylacetaldehyde + H2O2 + NH4(+). The catalysed reaction is N-acetylputrescine + O2 + H2O = 4-acetamidobutanal + H2O2 + NH4(+). In terms of biological role, catalyzes the oxidative deamination of primary and some secondary amines such as neurotransmitters, and exogenous amines including the tertiary amine, neurotoxin 1-methyl-4-phenyl-1,2,3,6-tetrahydropyridine (MPTP), with concomitant reduction of oxygen to hydrogen peroxide and participates in the metabolism of neuroactive and vasoactive amines in the central nervous system and peripheral tissues. Preferentially degrades benzylamine and phenylethylamine. The chain is Amine oxidase [flavin-containing] B from Canis lupus familiaris (Dog).